The following is a 380-amino-acid chain: S-phase entry cyclin-6 (380 aa).

Residues Pro-63–Glu-91 form a disordered region.

It belongs to the cyclin family. Cyclin AB subfamily.

Its function is as follows. Involved in G1/S and or S phase progression. Interacts with CDC28. This chain is S-phase entry cyclin-6 (CLB6), found in Saccharomyces cerevisiae (strain ATCC 204508 / S288c) (Baker's yeast).